Here is a 113-residue protein sequence, read N- to C-terminus: T cell receptor alpha variable 8-1 (113 aa).

The N-terminal stretch at 1–20 is a signal peptide; the sequence is MLLLLIPVLGMIFALRDARA. The Ig-like domain occupies 21–113; that stretch reads QSVSQHNHHV…DTAEYFCAVN (93 aa). Cys-42 and Cys-110 are joined by a disulfide. A glycan (N-linked (GlcNAc...) asparagine) is linked at Asn-43.

Alpha-beta TR is a heterodimer composed of an alpha and beta chain; disulfide-linked. The alpha-beta TR is associated with the transmembrane signaling CD3 coreceptor proteins to form the TR-CD3 (TcR or TCR). The assembly of alpha-beta TR heterodimers with CD3 occurs in the endoplasmic reticulum where a single alpha-beta TR heterodimer associates with one CD3D-CD3E heterodimer, one CD3G-CD3E heterodimer and one CD247 homodimer forming a stable octameric structure. CD3D-CD3E and CD3G-CD3E heterodimers preferentially associate with TR alpha and TR beta chains, respectively. The association of the CD247 homodimer is the last step of TcR assembly in the endoplasmic reticulum and is required for transport to the cell surface.

The protein resides in the cell membrane. V region of the variable domain of T cell receptor (TR) alpha chain that participates in the antigen recognition. Alpha-beta T cell receptors are antigen specific receptors which are essential to the immune response and are present on the cell surface of T lymphocytes. Recognize peptide-major histocompatibility (MH) (pMH) complexes that are displayed by antigen presenting cells (APC), a prerequisite for efficient T cell adaptive immunity against pathogens. Binding of alpha-beta TR to pMH complex initiates TR-CD3 clustering on the cell surface and intracellular activation of LCK that phosphorylates the ITAM motifs of CD3G, CD3D, CD3E and CD247 enabling the recruitment of ZAP70. In turn ZAP70 phosphorylates LAT, which recruits numerous signaling molecules to form the LAT signalosome. The LAT signalosome propagates signal branching to three major signaling pathways, the calcium, the mitogen-activated protein kinase (MAPK) kinase and the nuclear factor NF-kappa-B (NF-kB) pathways, leading to the mobilization of transcription factors that are critical for gene expression and essential for T cell growth and differentiation. The T cell repertoire is generated in the thymus, by V-(D)-J rearrangement. This repertoire is then shaped by intrathymic selection events to generate a peripheral T cell pool of self-MH restricted, non-autoaggressive T cells. Post-thymic interaction of alpha-beta TR with the pMH complexes shapes TR structural and functional avidity. The sequence is that of T cell receptor alpha variable 8-1 from Homo sapiens (Human).